The sequence spans 152 residues: SsrA-binding protein (152 aa).

This sequence belongs to the SmpB family.

The protein resides in the cytoplasm. In terms of biological role, required for rescue of stalled ribosomes mediated by trans-translation. Binds to transfer-messenger RNA (tmRNA), required for stable association of tmRNA with ribosomes. tmRNA and SmpB together mimic tRNA shape, replacing the anticodon stem-loop with SmpB. tmRNA is encoded by the ssrA gene; the 2 termini fold to resemble tRNA(Ala) and it encodes a 'tag peptide', a short internal open reading frame. During trans-translation Ala-aminoacylated tmRNA acts like a tRNA, entering the A-site of stalled ribosomes, displacing the stalled mRNA. The ribosome then switches to translate the ORF on the tmRNA; the nascent peptide is terminated with the 'tag peptide' encoded by the tmRNA and targeted for degradation. The ribosome is freed to recommence translation, which seems to be the essential function of trans-translation. The sequence is that of SsrA-binding protein from Sulfurihydrogenibium sp. (strain YO3AOP1).